The primary structure comprises 302 residues: Homoserine O-acetyltransferase (302 aa).

The active-site Acyl-thioester intermediate is the Cys142. Positions 163 and 192 each coordinate substrate. The active-site Proton acceptor is the His235. Residue Glu237 is part of the active site. Arg249 contacts substrate.

It belongs to the MetA family.

The protein resides in the cytoplasm. The enzyme catalyses L-homoserine + acetyl-CoA = O-acetyl-L-homoserine + CoA. The protein operates within amino-acid biosynthesis; L-methionine biosynthesis via de novo pathway; O-acetyl-L-homoserine from L-homoserine: step 1/1. In terms of biological role, transfers an acetyl group from acetyl-CoA to L-homoserine, forming acetyl-L-homoserine. The sequence is that of Homoserine O-acetyltransferase from Geobacillus kaustophilus (strain HTA426).